Consider the following 330-residue polypeptide: D-alanine--D-alanine ligase (330 aa).

The ATP-grasp domain occupies 121–321 (NHYLKDFGVK…IKDVMTDIIE (201 aa)). Residue 149-204 (VTRLGLPIFVKPNDGGSSFGVTKVKEVSAIQPAIAKAFGEGREVILERFIDGTEVT) participates in ATP binding. The Mg(2+) site is built by D275, E288, and N290.

This sequence belongs to the D-alanine--D-alanine ligase family. Requires Mg(2+) as cofactor. It depends on Mn(2+) as a cofactor.

It localises to the cytoplasm. The enzyme catalyses 2 D-alanine + ATP = D-alanyl-D-alanine + ADP + phosphate + H(+). It functions in the pathway cell wall biogenesis; peptidoglycan biosynthesis. Cell wall formation. In Parabacteroides distasonis (strain ATCC 8503 / DSM 20701 / CIP 104284 / JCM 5825 / NCTC 11152), this protein is D-alanine--D-alanine ligase.